The chain runs to 468 residues: bZIP transcription factor 14 (468 aa).

2 disordered regions span residues 55–149 (SRRK…EGRA) and 234–272 (SPQS…LGKD). Low complexity-rich tracts occupy residues 64-82 (SFVS…SSGS) and 95-106 (VTAASTESVSSS). Positions 112-128 (KKADTDDRVQRSRERNR) are enriched in basic and acidic residues. The bZIP 1 domain maps to 117-165 (DDRVQRSRERNRIHARKTRQRKKEQMQSLEGRATDLKHEQIRLKQIINE). The tract at residues 119–139 (RVQRSRERNRIHARKTRQRKK) is basic motif 1. The span at 129 to 138 (IHARKTRQRK) shows a compositional bias: basic residues. A leucine-zipper 1 region spans residues 145–159 (LEGRATDLKHEQIRL). Residues 247 to 256 (ASTSDVSGDE) are compositionally biased toward polar residues. One can recognise a bZIP 2 domain in the interval 279 to 333 (EELDQIRRERNRMHAKRTRDRKRIFTEEMAEMCRILEEENHLLRVHLGGLDSDFK). Positions 285-312 (RRERNRMHAKRTRDRKRIFTEEMAEMCR) are basic motif 2. Positions 313–320 (ILEEENHL) are leucine-zipper 2. The disordered stretch occupies residues 400–468 (ERQQREAERK…TTSLAAPVGW (69 aa)). Over residues 401–410 (RQQREAERKV) the composition is skewed to basic and acidic residues. The span at 417–426 (SAASDTSTSD) shows a compositional bias: low complexity.

It belongs to the bZIP family.

The protein resides in the nucleus. Transcriptional activator which binds to the C-box-like motif 5'-TGACGT-3' and A-box-like motif 5'-GTACGTA-3' of target promoters to positively regulate the expression of genes involved in the tricarboxylic acid (TCA) cycle in response to nitrogen starvation. May also regulate the TCA cycle during day-to-night transitions. The sequence is that of bZIP transcription factor 14 from Phaeodactylum tricornutum (strain CCAP 1055/1).